A 245-amino-acid polypeptide reads, in one-letter code: Small ribosomal subunit protein uS2 (245 aa).

It belongs to the universal ribosomal protein uS2 family.

The sequence is that of Small ribosomal subunit protein uS2 from Pseudomonas fluorescens (strain ATCC BAA-477 / NRRL B-23932 / Pf-5).